A 376-amino-acid chain; its full sequence is UDP-N-acetylglucosamine--N-acetylmuramyl-(pentapeptide) pyrophosphoryl-undecaprenol N-acetylglucosamine transferase (376 aa).

Residues T12–G14, N126, R163, S198, and Q296 each bind UDP-N-acetyl-alpha-D-glucosamine.

The protein belongs to the glycosyltransferase 28 family. MurG subfamily.

The protein resides in the cell membrane. It catalyses the reaction di-trans,octa-cis-undecaprenyl diphospho-N-acetyl-alpha-D-muramoyl-L-alanyl-D-glutamyl-meso-2,6-diaminopimeloyl-D-alanyl-D-alanine + UDP-N-acetyl-alpha-D-glucosamine = di-trans,octa-cis-undecaprenyl diphospho-[N-acetyl-alpha-D-glucosaminyl-(1-&gt;4)]-N-acetyl-alpha-D-muramoyl-L-alanyl-D-glutamyl-meso-2,6-diaminopimeloyl-D-alanyl-D-alanine + UDP + H(+). The protein operates within cell wall biogenesis; peptidoglycan biosynthesis. Cell wall formation. Catalyzes the transfer of a GlcNAc subunit on undecaprenyl-pyrophosphoryl-MurNAc-pentapeptide (lipid intermediate I) to form undecaprenyl-pyrophosphoryl-MurNAc-(pentapeptide)GlcNAc (lipid intermediate II). This Frankia casuarinae (strain DSM 45818 / CECT 9043 / HFP020203 / CcI3) protein is UDP-N-acetylglucosamine--N-acetylmuramyl-(pentapeptide) pyrophosphoryl-undecaprenol N-acetylglucosamine transferase.